Reading from the N-terminus, the 332-residue chain is Glyceraldehyde-3-phosphate dehydrogenase 1 (332 aa).

Residues Arg11, Ile12, Asp33, and Thr120 each coordinate NAD(+). Residues 149–151 (SCT), Thr180, 209–210 (TG), and Arg232 contribute to the D-glyceraldehyde 3-phosphate site. Cys150 functions as the Nucleophile in the catalytic mechanism. 2 residues coordinate NAD(+): Asn314 and Tyr318.

Belongs to the glyceraldehyde-3-phosphate dehydrogenase family. In terms of assembly, homotetramer.

It is found in the cytoplasm. It catalyses the reaction D-glyceraldehyde 3-phosphate + phosphate + NAD(+) = (2R)-3-phospho-glyceroyl phosphate + NADH + H(+). The catalysed reaction is NADH + H2O = (6R)-NADHX. The enzyme catalyses NADH + H2O = (6S)-NADHX. It carries out the reaction NADPH + H2O = (6R)-NADPHX. It catalyses the reaction NADPH + H2O = (6S)-NADPHX. It functions in the pathway carbohydrate degradation; glycolysis; pyruvate from D-glyceraldehyde 3-phosphate: step 1/5. Functionally, glyceraldehyde-3-phosphate dehydrogenase (GAPDH) involved in glycolysis and gluconeogenesis. Catalyzes the reaction of glyceraldehyde-3-phosphate to 1,3 bis-phosphoglycerate. The contribution of the TDH1, TDH2, and TDH3 to the total glyceraldehyde-3-phosphate dehydrogenase activity is 10-15, 25-30, and 50-60%, respectively. May be involved in a process other than glycolysis because it is synthesized by cells in stationary phase. As a side activity, catalyzes the hydration of the nicotinamide ring of NADH or NADPH at the C6 position to give the corresponding hydrates, NADHX and NADPHX, which exist as R and S epimers, that cannot act as electron donors or acceptors and inhibit several dehydrogenases, making them toxic. In Saccharomyces cerevisiae (strain ATCC 204508 / S288c) (Baker's yeast), this protein is Glyceraldehyde-3-phosphate dehydrogenase 1.